The following is a 358-amino-acid chain: Probable translocation protein Y4yK (358 aa).

The protein belongs to the FliN/MopA/SpaO family.

In terms of biological role, could be involved in the secretion of an unknown factor. The chain is Probable translocation protein Y4yK from Sinorhizobium fredii (strain NBRC 101917 / NGR234).